The primary structure comprises 804 residues: MDFSHKAIEKKWQKYWKENNIYKTTNNSEKKAYILDMFPYPSGAGLHVGHIKGYTATDVYSRFKRMQGYDVLHPIGWDAFGLPAEQYALKTGNDPREFTLQNIENFKIQLNKMGFSYDYDKEINTADPNYYKTTQWIFKQLYKKGLAENRDIDVNWCQELGTVLANDEIIEKDGLMVSERGEYPVVKKKMRQWVLKITDYADKLLDGLDNLDWPNSVKELQRNWIGKSEGCEINFKSNDINIPVFTTRADTIFGVTYIVLASENELVLKLTAPEKLEEVKKYIELTANKSEIERKDESRTKTGVFIGSYATNPLTKEQIQIWISDYVLNDYGSGAIMAVPAHDKRDWDFAAKFNLPIKFVIQTKDQSKAFVGEGIHINSEFLNDLDRIQALQVIHDYVDKNNLGKRKINYKLRDWLFSRQRFYGEPFPVLYDKDNNIVLIEDNNLPITLPITDYIKPTNTGESPLANVKNWVNVKIGDKEYKRETNTMPQSAASSWYFIAYILANSKNNLIDLTSDEAKKRLEKWLPVDLYIGGQEHAVGHLLYARFWTHFLYDLGLLPTNEPFKRLFNQGMILGPDNRKMSKSWGNVINPDDVIDTHGADALRLYEMFMGPLDASLPWSFDGLDASLKWLNRCYRMINKIEFSNTNNHKLDYVYNDVVKKVTQMIQELKFNTAISQLMVLVNAIYKEELNTVYKPYIEGFVKMLSLFAPHLSEELWEKLGNNSSVTLQTWPEFDETKIIKNAVVIALQVNGKLRSTIEVEKGTDKETLIKLAQENENIIRFIKDHKNLKYIAVVDRIVNIVIE.

The 'HIGH' region signature appears at Pro-39–His-50. A 'KMSKS' region motif is present at residues Lys-580–Ser-584. Lys-583 contributes to the ATP binding site.

It belongs to the class-I aminoacyl-tRNA synthetase family.

It is found in the cytoplasm. It catalyses the reaction tRNA(Leu) + L-leucine + ATP = L-leucyl-tRNA(Leu) + AMP + diphosphate. The protein is Leucine--tRNA ligase of Mycoplasma mycoides subsp. mycoides SC (strain CCUG 32753 / NCTC 10114 / PG1).